Reading from the N-terminus, the 411-residue chain is Serine hydroxymethyltransferase (411 aa).

120 to 122 lines the (6S)-5,6,7,8-tetrahydrofolate pocket; it reads GHL. Lysine 225 carries the N6-(pyridoxal phosphate)lysine modification. Position 350 to 352 (350 to 352) interacts with (6S)-5,6,7,8-tetrahydrofolate; sequence SPF.

Belongs to the SHMT family. In terms of assembly, homodimer. It depends on pyridoxal 5'-phosphate as a cofactor.

Its subcellular location is the cytoplasm. The catalysed reaction is (6R)-5,10-methylene-5,6,7,8-tetrahydrofolate + glycine + H2O = (6S)-5,6,7,8-tetrahydrofolate + L-serine. It participates in one-carbon metabolism; tetrahydrofolate interconversion. The protein operates within amino-acid biosynthesis; glycine biosynthesis; glycine from L-serine: step 1/1. Its function is as follows. Catalyzes the reversible interconversion of serine and glycine with tetrahydrofolate (THF) serving as the one-carbon carrier. This reaction serves as the major source of one-carbon groups required for the biosynthesis of purines, thymidylate, methionine, and other important biomolecules. Also exhibits THF-independent aldolase activity toward beta-hydroxyamino acids, producing glycine and aldehydes, via a retro-aldol mechanism. The polypeptide is Serine hydroxymethyltransferase (Lactobacillus acidophilus (strain ATCC 700396 / NCK56 / N2 / NCFM)).